Consider the following 192-residue polypeptide: MAP6 domain-containing protein 1 (192 aa).

S-palmitoyl cysteine attachment occurs at residues Cys-5, Cys-10, and Cys-11. Residues 36–106 (LESEEPIPGG…RTKPSATPGR (71 aa)) are disordered. The residue at position 38 (Ser-38) is a Phosphoserine. The segment covering 43–58 (PGGVPSRRGPSPAGSR) has biased composition (low complexity). Mn regions lie at residues 123 to 136 (TTSYRQEFQAWTGV) and 158 to 170 (DGSPRAGFQAPEV). Residue Ser-160 is modified to Phosphoserine.

It belongs to the STOP family. Interacts with calmodulin. Post-translationally, palmitoylated. Palmitoylation enhances association with microtubules.

It is found in the golgi apparatus. The protein localises to the cytoplasm. It localises to the cytoskeleton. May have microtubule-stabilizing activity. This chain is MAP6 domain-containing protein 1 (MAP6D1), found in Bos taurus (Bovine).